The chain runs to 156 residues: Snaclec stejaggregin-B subunit alpha (156 aa).

The signal sequence occupies residues 1 to 23 (MGRFISVSFGLLVVFLSLSGTGA). 3 disulfide bridges follow: Cys25/Cys36, Cys53/Cys150, and Cys125/Cys142. The C-type lectin domain maps to 32–151 (FKQYCYQIIK…CEQKHLFMCK (120 aa)).

This sequence belongs to the snaclec family. As to quaternary structure, heteromultimer; disulfide-linked. In terms of tissue distribution, expressed by the venom gland.

The protein resides in the secreted. Its function is as follows. Interferes with one step of hemostasis (modulation of platelet aggregation, or coagulation cascade, for example). This Trimeresurus stejnegeri (Chinese green tree viper) protein is Snaclec stejaggregin-B subunit alpha.